A 293-amino-acid polypeptide reads, in one-letter code: tRNA(His) guanylyltransferase (293 aa).

Residues Asp-29, Gly-30, and Asp-76 each contribute to the Mg(2+) site. Residues 29–34 (DGRGFT) and 75–76 (SD) contribute to the GTP site. The segment at 226–252 (KKVSEEEAEEMSSSAVPEVKSKSQVEK) is disordered.

Belongs to the tRNA(His) guanylyltransferase family. It depends on Mg(2+) as a cofactor.

The enzyme catalyses a 5'-end ribonucleotide-tRNA(His) + GTP + ATP + H2O = a 5'-end phospho-guanosine-ribonucleotide-tRNA(His) + AMP + 2 diphosphate + H(+). Functionally, adds a GMP to the 5'-end of tRNA(His) after transcription and RNase P cleavage. The protein is tRNA(His) guanylyltransferase (rgt-1) of Neurospora crassa (strain ATCC 24698 / 74-OR23-1A / CBS 708.71 / DSM 1257 / FGSC 987).